Reading from the N-terminus, the 597-residue chain is MKHIRNFSIIAHIDHGKSTLSDRLIQVCGGLSDREMAEQVLDSMDLERERGITIKAQSVTLDYTAKDGQTYQLNFIDTPGHVDFAYEVSRSLAACEGALLVVDAGQGVEAQTLANCYTAIEMDLEVVPILNKIDLPAAEPERVAEEIEDIVGIDAIDAVRCSAKTGVGVDEVLEKIVSAIPAPQGDPDAPLQALIIDSWFDNYLGVVSLVRIKNGSLKKNDKIKVMSTGQTWGVDRLGIFTPKQVDTDSLDTGEVGWVVCGIKDIMGAPVGDTLTLAKNGCEKALPGFKKVKPQVYAGLFPVSSDDYDNFRDALGKLSLNDASLFYEPETSAALGFGFRCGFLGMLHMEIIQERLEREYDLDLITTAPTVVYEVLKTNKEIVYVDSPAKLPAINDIEEIREPIARCNILVPADYLGNVITLCIEKRGTQVDMVYHGNQVALTYDIPMAEVVLDFFDRLKSTSRGYASLDYGFQRFEMSHMVRVDVLLNGDKVDALAIITHRDNSQTRGRQLVEKMKEFIPRQMFDIAIQAAIGNHIIARSTVKQLRKNVLAKCYGGDVSRKKKLLKKQKEGKKRMKQIGNVELPQEAFLAILHVGKD.

The 183-residue stretch at 2 to 184 folds into the tr-type G domain; that stretch reads KHIRNFSIIA…KIVSAIPAPQ (183 aa). GTP is bound by residues 14–19 and 131–134; these read DHGKST and NKID.

This sequence belongs to the TRAFAC class translation factor GTPase superfamily. Classic translation factor GTPase family. LepA subfamily.

Its subcellular location is the cell inner membrane. The catalysed reaction is GTP + H2O = GDP + phosphate + H(+). Its function is as follows. Required for accurate and efficient protein synthesis under certain stress conditions. May act as a fidelity factor of the translation reaction, by catalyzing a one-codon backward translocation of tRNAs on improperly translocated ribosomes. Back-translocation proceeds from a post-translocation (POST) complex to a pre-translocation (PRE) complex, thus giving elongation factor G a second chance to translocate the tRNAs correctly. Binds to ribosomes in a GTP-dependent manner. The sequence is that of Elongation factor 4 from Vibrio cholerae serotype O1 (strain ATCC 39541 / Classical Ogawa 395 / O395).